We begin with the raw amino-acid sequence, 141 residues long: uncharacterized protein (141 aa).

A run of 2 helical transmembrane segments spans residues 64–84 (IAAV…IEAI) and 112–132 (IVGS…LVLI).

It localises to the cell membrane. This is an uncharacterized protein from Sinorhizobium fredii (strain NBRC 101917 / NGR234).